Reading from the N-terminus, the 449-residue chain is Serine/threonine-protein phosphatase 2A activator 2 (449 aa).

2 disordered regions span residues 1 to 72 (MDSS…DPST) and 378 to 416 (MSEQ…PTGW). The span at 54–69 (NPTPVPETPALPPRPD) shows a compositional bias: pro residues. Over residues 389-403 (EENEEEGGEVEVYDD) the composition is skewed to acidic residues.

Belongs to the PTPA-type PPIase family.

The protein resides in the cytoplasm. The enzyme catalyses [protein]-peptidylproline (omega=180) = [protein]-peptidylproline (omega=0). Its function is as follows. PPIases accelerate the folding of proteins. It catalyzes the cis-trans isomerization of proline imidic peptide bonds in oligopeptides. Acts as a regulatory subunit for PP2A-like phosphatases modulating their activity or substrate specificity, probably by inducing a conformational change in the catalytic subunit, a direct target of the PPIase. Can reactivate inactive phosphatase PP2A-phosphatase methylesterase complexes (PP2Ai) in presence of ATP and Mg(2+) by dissociating the inactive form from the complex. This Neurospora crassa (strain ATCC 24698 / 74-OR23-1A / CBS 708.71 / DSM 1257 / FGSC 987) protein is Serine/threonine-protein phosphatase 2A activator 2 (rrd-2).